A 264-amino-acid polypeptide reads, in one-letter code: MKVIKTLSIINFFIFVTFNIKNESKYSNTFINNAYNMSIRRSMANEGSNTNSVGANAPNADTIASGSQRSTNSASTSTTNNGESQTTTPTAADTIASGSQRSTNSASTSTTNNGESQTTTPTAADTPTTTESNSPSPPITTTESSKFWQCTNKTDGKGEESEKQNELNESTEEGPKAPQEPQTAENENPAAPENKGTGQHGHMHGSRNNHPQNTSDSQKECTDGNKENCGAATSLLNNSSNIASINKFVVLISATLVLSFAIFI.

The signal sequence occupies residues 1–20 (MKVIKTLSIINFFIFVTFNI). 2 N-linked (GlcNAc...) asparagine glycosylation sites follow: asparagine 22 and asparagine 36. The polymorphic region stretch occupies residues 44–190 (ANEGSNTNSV…PQTAENENPA (147 aa)). Residues 46 to 225 (EGSNTNSVGA…DSQKECTDGN (180 aa)) are disordered. 2 tandem repeats follow at residues 60 to 91 (ADTI…TPTA) and 92 to 123 (ADTI…TPTA). Positions 60–123 (ADTIASGSQR…GESQTTTPTA (64 aa)) are 2 X 32 AA perfects repeats. Residues 70 to 81 (STNSASTSTTNN) are compositionally biased toward low complexity. Polar residues predominate over residues 82 to 101 (GESQTTTPTAADTIASGSQR). The span at 102 to 145 (STNSASTSTTNNGESQTTTPTAADTPTTTESNSPSPPITTTESS) shows a compositional bias: low complexity. A glycan (N-linked (GlcNAc...) asparagine) is linked at asparagine 152. Positions 154 to 166 (TDGKGEESEKQNE) are enriched in basic and acidic residues. N-linked (GlcNAc...) asparagine glycosylation is found at asparagine 168 and asparagine 213. A disulfide bridge connects residues cysteine 221 and cysteine 229. Asparagine 237 and asparagine 238 each carry an N-linked (GlcNAc...) asparagine glycan. Asparagine 238 carries the GPI-anchor amidated asparagine lipid modification. Positions 239 to 264 (SSNIASINKFVVLISATLVLSFAIFI) are cleaved as a propeptide — removed in mature form.

It is found in the cell membrane. Its function is as follows. May play a role in the merozoite attachment to the erythrocyte. In Plasmodium falciparum (isolate fid3 / India), this protein is Merozoite surface protein 2.